Consider the following 490-residue polypeptide: tRNA-2-methylthio-N(6)-dimethylallyladenosine synthase (490 aa).

The MTTase N-terminal domain occupies 37–154 (KKVYIATQGC…LPELYDKSTT (118 aa)). [4Fe-4S] cluster contacts are provided by C46, C83, C117, C198, C202, and C205. The Radical SAM core domain maps to 184 to 416 (KVEGYRAFVS…QKVIRDSTLK (233 aa)). The TRAM domain occupies 419-487 (EEMVGKTLRV…PHMVRGELVD (69 aa)).

Belongs to the methylthiotransferase family. MiaB subfamily. In terms of assembly, monomer. Requires [4Fe-4S] cluster as cofactor.

The protein localises to the cytoplasm. The enzyme catalyses N(6)-dimethylallyladenosine(37) in tRNA + (sulfur carrier)-SH + AH2 + 2 S-adenosyl-L-methionine = 2-methylsulfanyl-N(6)-dimethylallyladenosine(37) in tRNA + (sulfur carrier)-H + 5'-deoxyadenosine + L-methionine + A + S-adenosyl-L-homocysteine + 2 H(+). Its function is as follows. Catalyzes the methylthiolation of N6-(dimethylallyl)adenosine (i(6)A), leading to the formation of 2-methylthio-N6-(dimethylallyl)adenosine (ms(2)i(6)A) at position 37 in tRNAs that read codons beginning with uridine. This Psychrobacter sp. (strain PRwf-1) protein is tRNA-2-methylthio-N(6)-dimethylallyladenosine synthase.